Here is a 622-residue protein sequence, read N- to C-terminus: Mitochondrial distribution and morphology protein 32 (622 aa).

A mitochondrion-targeting transit peptide spans 1-70 (MLITRLRVPT…RTFPSNDKFT (70 aa)). At 71–123 (TKASNIETILLRKNNEREFKQSLLADAKNFQERFKINLKWILIKNNRPFSLNE) the chain is on the mitochondrial matrix side. A helical transmembrane segment spans residues 124 to 144 (ISIIASWLILSQILWLILSTT). Residues 145–601 (TFISFYLFVI…DWEFKNKNDW (457 aa)) are Mitochondrial intermembrane-facing. A helical membrane pass occupies residues 602 to 622 (MKQWGTTFASQLLLFGFGAMV).

It belongs to the MDM31/MDM32 family. Interacts with MDM31. Participates in a complex of about 175 kDa.

The protein resides in the mitochondrion inner membrane. Functionally, involved in the organization of the mitochondrial membranes and the global structure of the mitochondria. Also required for mitochondrial distribution and mobility as well as for the maintenance of mitochondrial DNA nucleoids structures. In Saccharomyces cerevisiae (strain ATCC 204508 / S288c) (Baker's yeast), this protein is Mitochondrial distribution and morphology protein 32 (MDM32).